The chain runs to 138 residues: Sec-independent protein translocase protein TatB (138 aa).

Residues 1 to 21 traverse the membrane as a helical segment; the sequence is MFDIGFSELLLIAVVALVVLG. Positions 116–138 are disordered; the sequence is VHHVHVPPPSTSTHGNNGQEKSQ. Over residues 126–138 the composition is skewed to polar residues; sequence TSTHGNNGQEKSQ.

This sequence belongs to the TatB family. In terms of assembly, the Tat system comprises two distinct complexes: a TatABC complex, containing multiple copies of TatA, TatB and TatC subunits, and a separate TatA complex, containing only TatA subunits. Substrates initially bind to the TatABC complex, which probably triggers association of the separate TatA complex to form the active translocon.

It is found in the cell inner membrane. Its function is as follows. Part of the twin-arginine translocation (Tat) system that transports large folded proteins containing a characteristic twin-arginine motif in their signal peptide across membranes. Together with TatC, TatB is part of a receptor directly interacting with Tat signal peptides. TatB may form an oligomeric binding site that transiently accommodates folded Tat precursor proteins before their translocation. The polypeptide is Sec-independent protein translocase protein TatB (Xylella fastidiosa (strain Temecula1 / ATCC 700964)).